Reading from the N-terminus, the 246-residue chain is Proteasome subunit alpha type-6 (246 aa).

The protein belongs to the peptidase T1A family. As to quaternary structure, the 26S proteasome consists of a 20S proteasome core and two 19S regulatory subunits. The 20S proteasome core is composed of 28 subunits that are arranged in four stacked rings, resulting in a barrel-shaped structure. The two end rings are each formed by seven alpha subunits, and the two central rings are each formed by seven beta subunits. The catalytic chamber with the active sites is on the inside of the barrel.

The protein localises to the cytoplasm. It localises to the nucleus. Functionally, the proteasome is a multicatalytic proteinase complex which is characterized by its ability to cleave peptides with Arg, Phe, Tyr, Leu, and Glu adjacent to the leaving group at neutral or slightly basic pH. The proteasome has an ATP-dependent proteolytic activity. This chain is Proteasome subunit alpha type-6 (PAA1), found in Oryza sativa subsp. japonica (Rice).